The chain runs to 257 residues: Inositol diphosphatase DSP2 (257 aa).

Residues 66-251 enclose the Tyrosine-protein phosphatase domain; sequence NFSMVDNGIF…VSGLKHTPMS (186 aa). 1D-myo-inositol hexakisphosphate is bound by residues Ile168 and Lys172. Cys192 acts as the Phosphocysteine intermediate in catalysis.

Belongs to the protein-tyrosine phosphatase family. Atypical dual-specificity phosphatase Siw14-like subfamily. Expressed in roots, leaves, stems, flowers and siliques.

The enzyme catalyses 5-diphospho-1D-myo-inositol 1,2,3,4,6-pentakisphosphate + H2O = 1D-myo-inositol hexakisphosphate + phosphate + H(+). The catalysed reaction is 1,5-bis(diphospho)-1D-myo-inositol 2,3,4,6-tetrakisphosphate + H2O = 1-diphospho-1D-myo-inositol 2,3,4,5,6-pentakisphosphate + phosphate + 2 H(+). It catalyses the reaction 3,5-bis(diphospho)-1D-myo-inositol 1,2,4,6-tetrakisphosphate + H2O = 3-diphospho-1D-myo-inositol 1,2,4,5,6-pentakisphosphate + phosphate + 2 H(+). It carries out the reaction 6-diphospho-1D-myo-inositol pentakisphosphate + H2O = 1D-myo-inositol hexakisphosphate + phosphate + H(+). Functionally, cleaves the beta-phosphate at the 5-position of soluble inositol pyrophosphates. Has highest activity on 5-diphosphoinositol 1,2,3,4,6-pentakisphosphate (5-InsP(7)), 1,5-bis-diphosphoinositol 2,3,4,6-tetrakisphosphate (1,5-InsP(8)) and 3,5-InsP(8). Possesses phosphotyrosine phosphatase activity in vitro. Dephosphorylates the phosphoinositides PI(3,5)P2. Hydrolyzes para-nitrophenyl phosphate and O-methylfluorescein phosphate in vitro. The sequence is that of Inositol diphosphatase DSP2 from Arabidopsis thaliana (Mouse-ear cress).